The primary structure comprises 172 residues: Ribosome maturation factor RimM (172 aa).

Residues 95–168 (QEGEFYYHQI…CVDVELMEGL (74 aa)) enclose the PRC barrel domain.

It belongs to the RimM family. As to quaternary structure, binds ribosomal protein uS19.

Its subcellular location is the cytoplasm. Its function is as follows. An accessory protein needed during the final step in the assembly of 30S ribosomal subunit, possibly for assembly of the head region. Essential for efficient processing of 16S rRNA. May be needed both before and after RbfA during the maturation of 16S rRNA. It has affinity for free ribosomal 30S subunits but not for 70S ribosomes. The sequence is that of Ribosome maturation factor RimM from Streptococcus pyogenes serotype M49 (strain NZ131).